Reading from the N-terminus, the 337-residue chain is Cathepsin L-like (337 aa).

An N-terminal signal peptide occupies residues M1 to S18. Positions A19 to Q119 are cleaved as a propeptide — activation peptide. N108 carries N-linked (GlcNAc...) asparagine glycosylation. Intrachain disulfides connect C141-C184, C175-C217, and C276-C326. C144 is an active-site residue. Active-site residues include H283 and N304.

It belongs to the peptidase C1 family. Expressed in intestine, pharynx posterior bulb, hypodermis and cuticle (at protein level). Expressed in germ cells, developing oocytes, sheath cells surrounding germ cells and oocytes, and in the eggshell (at protein level).

The protein localises to the secreted. It localises to the cytoplasmic granule. It is found in the lysosome. The protein resides in the endosome. Its subcellular location is the cytoplasmic vesicle. The protein localises to the phagosome. The catalysed reaction is Specificity close to that of papain. As compared to cathepsin B, cathepsin L exhibits higher activity toward protein substrates, but has little activity on Z-Arg-Arg-NHMec, and no peptidyl-dipeptidase activity.. In terms of biological role, cysteine protease which plays an essential role in the degradation of proteins in lysosomes. During early embryogenesis, maternally required for the proteolytic processing of yolk proteins in platelets, a lysosome-like structure where a slow and controlled degradation of yolk proteins occurs. In the gonad, required for the clearance of apoptotic germ cells in the engulfing cell phagolysosomes. In embryos, required for the degradation of endocytic and autophagic cargos. In embryos, may play a role in the degradation of lipid-containing droplets. Required for larval development. This Caenorhabditis elegans protein is Cathepsin L-like.